A 266-amino-acid polypeptide reads, in one-letter code: Glucosamine-6-phosphate deaminase (266 aa).

The Proton acceptor; for enolization step role is filled by aspartate 72. Catalysis depends on aspartate 141, which acts as the For ring-opening step. Histidine 143 acts as the Proton acceptor; for ring-opening step in catalysis. The active-site For ring-opening step is glutamate 148.

This sequence belongs to the glucosamine/galactosamine-6-phosphate isomerase family. NagB subfamily. Homohexamer.

It catalyses the reaction alpha-D-glucosamine 6-phosphate + H2O = beta-D-fructose 6-phosphate + NH4(+). Its pathway is amino-sugar metabolism; N-acetylneuraminate degradation; D-fructose 6-phosphate from N-acetylneuraminate: step 5/5. Allosterically activated by N-acetylglucosamine 6-phosphate (GlcNAc6P). Catalyzes the reversible isomerization-deamination of glucosamine 6-phosphate (GlcN6P) to form fructose 6-phosphate (Fru6P) and ammonium ion. This chain is Glucosamine-6-phosphate deaminase, found in Salmonella arizonae (strain ATCC BAA-731 / CDC346-86 / RSK2980).